Reading from the N-terminus, the 267-residue chain is Oxidoreductase ordB (267 aa).

Belongs to the avfA family.

It functions in the pathway mycotoxin biosynthesis. Functionally, oxidoreductase; part of the fragmented gene cluster that mediates the biosynthesis of dothistromin (DOTH), a polyketide toxin very similar in structure to the aflatoxin precursor, versicolorin B. The first step of the pathway is the conversion of acetate to norsolorinic acid (NOR) and requires the fatty acid synthase subunits hexA and hexB, as well as the polyketide synthase pksA. PksA combines a hexanoyl starter unit and 7 malonyl-CoA extender units to synthesize the precursor NOR. The hexanoyl starter unit is provided to the acyl-carrier protein (ACP) domain by the fungal fatty acid synthase hexA/hexB. The second step is the conversion of NOR to averantin (AVN) and requires the norsolorinic acid ketoreductase nor1, which catalyzes the dehydration of norsolorinic acid to form (1'S)-averantin. The cytochrome P450 monooxygenase avnA then catalyzes the hydroxylation of AVN to 5'hydroxyaverantin (HAVN). The next step is performed by adhA that transforms HAVN to averufin (AVF). Averufin might then be converted to hydroxyversicolorone by cypX and avfA. Hydroxyversicolorone is further converted versiconal hemiacetal acetate (VHA) by moxY. VHA is then the substrate for the versiconal hemiacetal acetate esterase est1 to yield versiconal (VAL). Versicolorin B synthase vbsA then converts VAL to versicolorin B (VERB) by closing the bisfuran ring. Then, the activity of the versicolorin B desaturase verB leads to versicolorin A (VERA). DotB, a predicted chloroperoxidase, may perform epoxidation of the A-ring of VERA. Alternatively, a cytochrome P450, such as cypX or avnA could catalyze this step. It is also possible that another, uncharacterized, cytochrome P450 enzyme is responsible for this step. Opening of the epoxide could potentially be achieved by the epoxide hydrolase epoA. However, epoA seems not to be required for DOTH biosynthesis, but other epoxide hydrolases may have the ability to complement this hydrolysis. Alternatively, opening of the epoxide ring could be achieved non-enzymatically. The next step is the deoxygenation of ring A to yield the 5,8-dihydroxyanthraquinone which is most likely catalyzed by the NADPH dehydrogenase encoded by ver1. The last stages of DOTH biosynthesis are proposed to involve hydroxylation of the bisfuran. OrdB and norB might have oxidative roles here. An alternative possibility is that cytochrome P450 monoogenases such as avnA and cypX might perform these steps in addition to previously proposed steps. This Dothistroma septosporum (strain NZE10 / CBS 128990) (Red band needle blight fungus) protein is Oxidoreductase ordB.